The primary structure comprises 396 residues: Tyrosine--tRNA ligase (396 aa).

The 'HIGH' region signature appears at P43–H52. The 'KMSKS' region motif lies at K227–S231. An ATP-binding site is contributed by K230. One can recognise an S4 RNA-binding domain in the interval I338 to V396.

The protein belongs to the class-I aminoacyl-tRNA synthetase family. TyrS type 2 subfamily. As to quaternary structure, homodimer.

It localises to the cytoplasm. It catalyses the reaction tRNA(Tyr) + L-tyrosine + ATP = L-tyrosyl-tRNA(Tyr) + AMP + diphosphate + H(+). Functionally, catalyzes the attachment of tyrosine to tRNA(Tyr) in a two-step reaction: tyrosine is first activated by ATP to form Tyr-AMP and then transferred to the acceptor end of tRNA(Tyr). In Dehalococcoides mccartyi (strain ATCC BAA-2266 / KCTC 15142 / 195) (Dehalococcoides ethenogenes (strain 195)), this protein is Tyrosine--tRNA ligase.